Consider the following 120-residue polypeptide: MSKKFSRRKEQREKKKIALERIDILFNLAERVFAYDKELANRYVEIALAVQQKAKVRMPRKWKRRYCKKCHSFLVPGVNARVRLRQKRMPHVVIKCLECGHIMRYPYLREKKERRKAKKQ.

Residues Cys67, Cys70, Cys96, and Cys99 each coordinate Zn(2+).

It belongs to the eukaryotic/archaeal RNase P protein component 4 family. Consists of a catalytic RNA component and at least 4-5 protein subunits. Requires Zn(2+) as cofactor.

The protein localises to the cytoplasm. It carries out the reaction Endonucleolytic cleavage of RNA, removing 5'-extranucleotides from tRNA precursor.. Its function is as follows. Part of ribonuclease P, a protein complex that generates mature tRNA molecules by cleaving their 5'-ends. The protein is Ribonuclease P protein component 4 of Thermococcus sibiricus (strain DSM 12597 / MM 739).